Here is a 543-residue protein sequence, read N- to C-terminus: Hydroxylamine reductase (543 aa).

[4Fe-4S] cluster-binding residues include C5, C8, C17, and C23. Hybrid [4Fe-2O-2S] cluster is bound by residues H236, E260, C304, C398, C426, C451, E486, and K488. C398 is subject to Cysteine persulfide.

This sequence belongs to the HCP family. [4Fe-4S] cluster serves as cofactor. The cofactor is hybrid [4Fe-2O-2S] cluster.

It localises to the cytoplasm. It carries out the reaction A + NH4(+) + H2O = hydroxylamine + AH2 + H(+). Functionally, catalyzes the reduction of hydroxylamine to form NH(3) and H(2)O. The sequence is that of Hydroxylamine reductase from Bacteroides thetaiotaomicron (strain ATCC 29148 / DSM 2079 / JCM 5827 / CCUG 10774 / NCTC 10582 / VPI-5482 / E50).